The sequence spans 479 residues: Bifunctional protein HldE (479 aa).

The interval 1–322 (MIDDFRFGRI…RELLQEMPET (322 aa)) is ribokinase. 198-201 (NRIE) contributes to the ATP binding site. Asp-267 is an active-site residue. The interval 347 to 479 (FTNGCFDLVH…LVRGMQSAPS (133 aa)) is cytidylyltransferase.

It in the N-terminal section; belongs to the carbohydrate kinase PfkB family. This sequence in the C-terminal section; belongs to the cytidylyltransferase family. In terms of assembly, homodimer.

The enzyme catalyses D-glycero-beta-D-manno-heptose 7-phosphate + ATP = D-glycero-beta-D-manno-heptose 1,7-bisphosphate + ADP + H(+). It catalyses the reaction D-glycero-beta-D-manno-heptose 1-phosphate + ATP + H(+) = ADP-D-glycero-beta-D-manno-heptose + diphosphate. The protein operates within nucleotide-sugar biosynthesis; ADP-L-glycero-beta-D-manno-heptose biosynthesis; ADP-L-glycero-beta-D-manno-heptose from D-glycero-beta-D-manno-heptose 7-phosphate: step 1/4. It functions in the pathway nucleotide-sugar biosynthesis; ADP-L-glycero-beta-D-manno-heptose biosynthesis; ADP-L-glycero-beta-D-manno-heptose from D-glycero-beta-D-manno-heptose 7-phosphate: step 3/4. Its function is as follows. Catalyzes the phosphorylation of D-glycero-D-manno-heptose 7-phosphate at the C-1 position to selectively form D-glycero-beta-D-manno-heptose-1,7-bisphosphate. Catalyzes the ADP transfer from ATP to D-glycero-beta-D-manno-heptose 1-phosphate, yielding ADP-D-glycero-beta-D-manno-heptose. This Gluconobacter oxydans (strain 621H) (Gluconobacter suboxydans) protein is Bifunctional protein HldE.